The primary structure comprises 664 residues: UvrABC system protein B (664 aa).

A Helicase ATP-binding domain is found at 25–412 (KGLVSGLTDQ…LQVVEQLVRP (388 aa)). An ATP-binding site is contributed by 38–45 (GVTGSGKT). The Beta-hairpin signature appears at 91–114 (YYDYYQPEAYVPQKDMYIEKDSDI). Residues 428–594 (QIDDLLEEVK…GIRKAIKDIN (167 aa)) enclose the Helicase C-terminal domain. The UVR domain occupies 620-655 (ARLIKELESQMKKAAKNLEFERAALIRDRVVELRAA).

The protein belongs to the UvrB family. In terms of assembly, forms a heterotetramer with UvrA during the search for lesions. Interacts with UvrC in an incision complex.

It localises to the cytoplasm. In terms of biological role, the UvrABC repair system catalyzes the recognition and processing of DNA lesions. A damage recognition complex composed of 2 UvrA and 2 UvrB subunits scans DNA for abnormalities. Upon binding of the UvrA(2)B(2) complex to a putative damaged site, the DNA wraps around one UvrB monomer. DNA wrap is dependent on ATP binding by UvrB and probably causes local melting of the DNA helix, facilitating insertion of UvrB beta-hairpin between the DNA strands. Then UvrB probes one DNA strand for the presence of a lesion. If a lesion is found the UvrA subunits dissociate and the UvrB-DNA preincision complex is formed. This complex is subsequently bound by UvrC and the second UvrB is released. If no lesion is found, the DNA wraps around the other UvrB subunit that will check the other stand for damage. This Dehalococcoides mccartyi (strain CBDB1) protein is UvrABC system protein B.